A 1733-amino-acid polypeptide reads, in one-letter code: Polyketide synthase Pks13 (1733 aa).

The Carrier 1 domain maps to 17–95; that stretch reads ELTVPEMRQW…SLATRIIEGE (79 aa). An O-(pantetheine 4'-phosphoryl)serine modification is found at S55. One can recognise a Ketosynthase family 3 (KS3) domain in the interval 116-541; that stretch reads RVDIAIVGLS…GANAHVVVRE (426 aa). C287 serves as the catalytic Acyl-thioester intermediate; for beta-ketoacyl synthase activity. Active-site for beta-ketoacyl synthase activity residues include H423 and H463. Residues 548 to 560 are compositionally biased toward basic and acidic residues; that stretch reads VEKEPEPEPEPKA. A disordered region spans residues 548–567; it reads VEKEPEPEPEPKAAAEPAEA. Residues 713-1034 form an acyltransferase region; it reads VWVLAGFGAQ…MVSTMAQLYV (322 aa). The active-site Acyl-ester intermediate; for acyltransferase activity is the S801. The Carrier 2 domain maps to 1232–1309; the sequence is ETIAERLGLI…KLIEYAVEHR (78 aa). S1266 carries the post-translational modification O-(pantetheine 4'-phosphoryl)serine. A disordered region spans residues 1344–1368; it reads PVDSEAGVALPSPQNGEQPNPTGPA. Residues 1470–1563 are thioesterase-like; it reads PVFVFHPAGG…RFVGLIDAVR (94 aa). Residue S1533 is the For thioesterase-like activity of the active site.

Post-translationally, 4'-phosphopantetheine is transferred from CoA to specific serines of apo-Pks13 by PptT.

It participates in lipid metabolism; mycolic acid biosynthesis. The presence of FadD32 is necessary for the transfer of the acyl chain from the AMP carrier onto Pks13. Functionally, involved in the biosynthesis of mycolic acids. Forms, with FadD32, the initiation module of the mycolic condensation system. Synthesizes, in coupled reaction with FadD32, the biosynthetic precursors of mycolic acids, alpha-alkyl beta-ketoacids, via the condensation of two long chain fatty acid derivatives, a very long meromycoloyl-AMP and a shorter 2-carboxyacyl-CoA. The acyl chain of the acyl-AMP produced by FadD32 is specifically transferred onto the N-terminal ACP domain of Pks13, and then transferred onto the KS domain. The extender unit carboxyacyl-CoA is specifically loaded onto the AT domain, which catalyzes the covalent attachment of the carboxyacyl chain to its active site, and its subsequent transfer onto the P-pant arm of the C-terminal ACP domain. The KS domain catalyzes the condensation between the two loaded fatty acyl chains to produce an alpha-alkyl beta-ketothioester linked to the C-ACP domain. Then, the thioesterase-like domain acts as a transacylase and is responsible for both the release and the transfer of the alpha-alkyl beta-ketoacyl chain onto a polyol acceptor molecule, particularly trehalose, leading to the formation of the trehalose monomycolate precursor. The polypeptide is Polyketide synthase Pks13 (Mycobacterium tuberculosis (strain ATCC 25618 / H37Rv)).